The sequence spans 214 residues: Large ribosomal subunit protein uL3 (214 aa).

Positions 129–155 are disordered; sequence FGRGPMSHGSKNHRRPGSVGAGTTPGR.

This sequence belongs to the universal ribosomal protein uL3 family. In terms of assembly, part of the 50S ribosomal subunit. Forms a cluster with proteins L14 and L19.

Functionally, one of the primary rRNA binding proteins, it binds directly near the 3'-end of the 23S rRNA, where it nucleates assembly of the 50S subunit. This Synechococcus sp. (strain JA-3-3Ab) (Cyanobacteria bacterium Yellowstone A-Prime) protein is Large ribosomal subunit protein uL3.